The sequence spans 163 residues: Endoribonuclease YbeY (163 aa).

Zn(2+) contacts are provided by His-121, His-125, and His-131.

Belongs to the endoribonuclease YbeY family. Zn(2+) is required as a cofactor.

The protein resides in the cytoplasm. Single strand-specific metallo-endoribonuclease involved in late-stage 70S ribosome quality control and in maturation of the 3' terminus of the 16S rRNA. The chain is Endoribonuclease YbeY from Synechococcus sp. (strain JA-2-3B'a(2-13)) (Cyanobacteria bacterium Yellowstone B-Prime).